The following is a 464-amino-acid chain: E3 ubiquitin-protein ligase TRAIP (464 aa).

The segment at C7–R50 adopts an RING-type; atypical zinc-finger fold. Coiled-coil stretches lie at residues L142 to D186 and A236 to T277. The tract at residues K439 to K464 is disordered. The PIP-box motif lies at Q456–K464.

This sequence belongs to the TRAIP family.

Its subcellular location is the nucleus. The protein resides in the nucleoplasm. The protein localises to the nucleolus. It localises to the chromosome. It is found in the cytoplasm. It carries out the reaction S-ubiquitinyl-[E2 ubiquitin-conjugating enzyme]-L-cysteine + [acceptor protein]-L-lysine = [E2 ubiquitin-conjugating enzyme]-L-cysteine + N(6)-ubiquitinyl-[acceptor protein]-L-lysine.. It participates in protein modification; protein ubiquitination. In terms of biological role, E3 ubiquitin ligase required to protect genome stability in response to replication stress. Acts as a key regulator of interstrand cross-link repair, which takes place when both strands of duplex DNA are covalently tethered together, thereby blocking replication and transcription. Controls the choice between the two pathways of replication-coupled interstrand-cross-link repair by mediating ubiquitination of mcm7 subunit of the CMG helicase complex. Short ubiquitin chains on mcm7 promote recruitment of DNA glycosylase neil3. If the interstrand cross-link cannot be cleaved by neil3, the ubiquitin chains continue to grow on mcm7, promoting the unloading of the CMG helicase complex by the vcp/p97 ATPase, enabling the Fanconi anemia DNA repair pathway. Only catalyzes ubiquitination of mcm7 when forks converge. Also involved in the repair of covalent DNA-protein cross-links (DPCs) during DNA synthesis: promotes ubiquitination of DPCs, leading to their degradation by the proteasome. Also acts as a negative regulator of innate immune signaling by inhibiting activation of NF-kappa-B mediated by TNF. The polypeptide is E3 ubiquitin-protein ligase TRAIP (Xenopus laevis (African clawed frog)).